The sequence spans 469 residues: Gamma-aminobutyric acid permease (469 aa).

Residues 1–17 (MNQSQSGLKKELKTRHM) lie on the Cytoplasmic side of the membrane. Residues 18 to 38 (TMISIAGVIGAGLFVGSGSVI) traverse the membrane as a helical segment. Residue His-39 is a topological domain, extracellular. A helical transmembrane segment spans residues 40 to 60 (STGPGAVVSYALAGLLVIFIM). Topologically, residues 61–94 (RMLGEMSAVNPTSGSFSQYAHDAIGPWAGFTIGW) are cytoplasmic. The helical transmembrane segment at 95–115 (LYWFFWVIVIAIEAIAGAGII) threads the bilayer. Residue Gln-116 is a topological domain, extracellular. Residues 117 to 137 (YWFHDIPLWLTSLILTIVLTL) traverse the membrane as a helical segment. Residues 138 to 157 (TNVYSVKSFGEFEYWFSLIK) lie on the Cytoplasmic side of the membrane. The helical transmembrane segment at 158-178 (VVTIIAFLIVGFAFIFGFAPG) threads the bilayer. The Extracellular segment spans residues 179–200 (SEPVGFSNLTGKGGFFPEGISS). Residues 201–221 (VLLGIVVVIFSFMGTEIVAIA) traverse the membrane as a helical segment. Over 222 to 242 (AGETSNPIESVTKATRSVVWR) the chain is Cytoplasmic. A helical membrane pass occupies residues 243–263 (IIVFYVGSIAIVVALLPWNSA). The Extracellular segment spans residues 264-269 (NILESP). A helical membrane pass occupies residues 270–290 (FVAVLEHIGVPAAAQIMNFIV). Topologically, residues 291–328 (LTAVLSCLNSGLYTTSRMLYSLAERNEAPRRFMKLSKK) are cytoplasmic. Residues 329 to 349 (GVPVQAIVAGTFFSYIAVVMN) form a helical membrane-spanning segment. The Extracellular portion of the chain corresponds to 350–355 (YFSPDT). Residues 356 to 376 (VFLFLVNSSGAIALLVYLVIA) traverse the membrane as a helical segment. The Cytoplasmic segment spans residues 377-401 (VSQLKMRKKLEKTNPEALKIKMWLF). Residues 402–422 (PFLTYLTIIAICGILVSMAFI) form a helical membrane-spanning segment. Residues 423–425 (DSM) lie on the Extracellular side of the membrane. Residues 426–446 (RDELLLTGVITGIVLISYLVF) form a helical membrane-spanning segment. Residues 447-469 (RKRKVSEKAAANPVTQQQPDILP) are Cytoplasmic-facing.

It belongs to the amino acid-polyamine-organocation (APC) superfamily. Amino acid transporter (AAT) (TC 2.A.3.1) family.

The protein resides in the cell membrane. It catalyses the reaction 4-aminobutanoate(in) + H(+)(in) = 4-aminobutanoate(out) + H(+)(out). The enzyme catalyses beta-alanine(in) + H(+)(in) = beta-alanine(out) + H(+)(out). Its pathway is amino-acid degradation; 4-aminobutanoate degradation. In terms of biological role, transporter for gamma-aminobutyrate (GABA). Can also transport beta-alanine. Can translocate several open-chain GABA analogs (3-aminobutyrate, 3-aminopropanoate, cis-4-aminobutenoate) across the membrane via counterflow against GABA, but cannot transport muscimol. Also functions as a low-affinity proline importer. In Bacillus subtilis (strain 168), this protein is Gamma-aminobutyric acid permease.